Consider the following 457-residue polypeptide: Siroheme synthase (457 aa).

The tract at residues Met1–Thr204 is precorrin-2 dehydrogenase /sirohydrochlorin ferrochelatase. NAD(+) is bound by residues Asp22 to Val23 and Leu43 to Ala44. Phosphoserine is present on Ser128. The interval Gly216 to His457 is uroporphyrinogen-III C-methyltransferase. Pro225 provides a ligand contact to S-adenosyl-L-methionine. Asp248 acts as the Proton acceptor in catalysis. Residue Lys270 is the Proton donor of the active site. S-adenosyl-L-methionine-binding positions include Gly301–Asp303, Ile306, Thr331–Ala332, Met382, and Gly411.

In the N-terminal section; belongs to the precorrin-2 dehydrogenase / sirohydrochlorin ferrochelatase family. The protein in the C-terminal section; belongs to the precorrin methyltransferase family.

The catalysed reaction is uroporphyrinogen III + 2 S-adenosyl-L-methionine = precorrin-2 + 2 S-adenosyl-L-homocysteine + H(+). The enzyme catalyses precorrin-2 + NAD(+) = sirohydrochlorin + NADH + 2 H(+). It carries out the reaction siroheme + 2 H(+) = sirohydrochlorin + Fe(2+). It functions in the pathway cofactor biosynthesis; adenosylcobalamin biosynthesis; precorrin-2 from uroporphyrinogen III: step 1/1. Its pathway is cofactor biosynthesis; adenosylcobalamin biosynthesis; sirohydrochlorin from precorrin-2: step 1/1. It participates in porphyrin-containing compound metabolism; siroheme biosynthesis; precorrin-2 from uroporphyrinogen III: step 1/1. The protein operates within porphyrin-containing compound metabolism; siroheme biosynthesis; siroheme from sirohydrochlorin: step 1/1. It functions in the pathway porphyrin-containing compound metabolism; siroheme biosynthesis; sirohydrochlorin from precorrin-2: step 1/1. Its function is as follows. Multifunctional enzyme that catalyzes the SAM-dependent methylations of uroporphyrinogen III at position C-2 and C-7 to form precorrin-2 via precorrin-1. Then it catalyzes the NAD-dependent ring dehydrogenation of precorrin-2 to yield sirohydrochlorin. Finally, it catalyzes the ferrochelation of sirohydrochlorin to yield siroheme. The sequence is that of Siroheme synthase from Shigella dysenteriae serotype 1 (strain Sd197).